A 453-amino-acid polypeptide reads, in one-letter code: tRNA-2-methylthio-N(6)-dimethylallyladenosine synthase (453 aa).

The 119-residue stretch at 17–135 (GTFFIETWGC…FPEYLNRAKQ (119 aa)) folds into the MTTase N-terminal domain. The [4Fe-4S] cluster site is built by Cys26, Cys62, Cys96, Cys172, Cys176, and Cys179. The region spanning 158 to 388 (RKSSTKAFVT…VEVVNKSCEK (231 aa)) is the Radical SAM core domain. One can recognise a TRAM domain in the interval 391–453 (KKYQDRIVKV…LSFSLEGEEV (63 aa)).

This sequence belongs to the methylthiotransferase family. MiaB subfamily. Monomer. It depends on [4Fe-4S] cluster as a cofactor.

The protein localises to the cytoplasm. It catalyses the reaction N(6)-dimethylallyladenosine(37) in tRNA + (sulfur carrier)-SH + AH2 + 2 S-adenosyl-L-methionine = 2-methylsulfanyl-N(6)-dimethylallyladenosine(37) in tRNA + (sulfur carrier)-H + 5'-deoxyadenosine + L-methionine + A + S-adenosyl-L-homocysteine + 2 H(+). In terms of biological role, catalyzes the methylthiolation of N6-(dimethylallyl)adenosine (i(6)A), leading to the formation of 2-methylthio-N6-(dimethylallyl)adenosine (ms(2)i(6)A) at position 37 in tRNAs that read codons beginning with uridine. The sequence is that of tRNA-2-methylthio-N(6)-dimethylallyladenosine synthase from Clostridium tetani (strain Massachusetts / E88).